A 396-amino-acid polypeptide reads, in one-letter code: Phosphoglycerate kinase (396 aa).

Substrate contacts are provided by residues 21 to 23 (DFN), arginine 36, 59 to 62 (HLGR), arginine 118, and arginine 151. ATP is bound by residues lysine 201, glycine 292, glutamate 323, and 349–352 (GGDS).

This sequence belongs to the phosphoglycerate kinase family. As to quaternary structure, monomer.

It localises to the cytoplasm. It catalyses the reaction (2R)-3-phosphoglycerate + ATP = (2R)-3-phospho-glyceroyl phosphate + ADP. It participates in carbohydrate degradation; glycolysis; pyruvate from D-glyceraldehyde 3-phosphate: step 2/5. The protein is Phosphoglycerate kinase of Leptospira biflexa serovar Patoc (strain Patoc 1 / Ames).